Reading from the N-terminus, the 318-residue chain is Protoheme IX farnesyltransferase (318 aa).

9 consecutive transmembrane segments (helical) span residues 37–57, 59–79, 108–128, 131–151, 158–178, 183–203, 216–238, 249–269, and 296–316; these read VMELLLVTTLPTMIFAARGLP, IWLILATMIGGAFAAGSAGAF, EALVFSWALGILSIAILWFGA, LAGLLGIAAIFFYVVVYTLIL, NIVWGGVAGCMPVLIAWAAVT, WPAIILFMVIFLWTPPHYWPL, VPMLGAVAGARIVSVQVVLYTWA, LGHACIVYTVVAGAAGLWFLL, and ISYLTLLFVALAVDPFVGMPL.

It belongs to the UbiA prenyltransferase family. Protoheme IX farnesyltransferase subfamily.

It localises to the cell membrane. The catalysed reaction is heme b + (2E,6E)-farnesyl diphosphate + H2O = Fe(II)-heme o + diphosphate. The protein operates within porphyrin-containing compound metabolism; heme O biosynthesis; heme O from protoheme: step 1/1. Converts heme B (protoheme IX) to heme O by substitution of the vinyl group on carbon 2 of heme B porphyrin ring with a hydroxyethyl farnesyl side group. The polypeptide is Protoheme IX farnesyltransferase (Renibacterium salmoninarum (strain ATCC 33209 / DSM 20767 / JCM 11484 / NBRC 15589 / NCIMB 2235)).